The primary structure comprises 727 residues: Translation initiation factor IF-2, mitochondrial (727 aa).

A mitochondrion-targeting transit peptide spans 1–29 (MNRKILKLENLLRFHTICRQLHSLCQRRM). The tr-type G domain occupies 178 to 348 (PRSPVVTIMG…IALAEMLELK (171 aa)). The segment at 187–194 (GHVDHGKT) is G1. GTP is bound at residue 187–194 (GHVDHGKT). Positions 212-216 (GITQH) are G2. GTP-binding positions include 234 to 237 (DTPG) and 288 to 291 (NKCD). The segment at 234–237 (DTPG) is G3. The segment at 288-291 (NKCD) is G4. The segment at 324 to 326 (SAL) is G5. Residue Thr-688 is modified to Phosphothreonine.

The protein belongs to the TRAFAC class translation factor GTPase superfamily. Classic translation factor GTPase family. IF-2 subfamily. Monomer.

Its subcellular location is the mitochondrion. Its function is as follows. One of the essential components for the initiation of protein synthesis. Protects formylmethionyl-tRNA from spontaneous hydrolysis and promotes its binding to the 30S ribosomal subunits. Also involved in the hydrolysis of GTP during the formation of the 70S ribosomal complex. The protein is Translation initiation factor IF-2, mitochondrial (MTIF2) of Bos taurus (Bovine).